Reading from the N-terminus, the 459-residue chain is MKKLWGGRFKKTAEEWVDEFGASIPFDQELVEEDIEGSIAHATMLGKCGILPSEDVEKIKAGLFTLLEKAKQGKLEFSVAYEDIHLNIEKMLIDEIGPVGGKLHTGRSRNDQVATDMHLYLRKRVTEIIALIQELQKVLVEKAEEHVETIVPGYTHLQRAQPISFAHHLLAYFWMLERDRERFRESLKRINKSPLGAGALAGTTFPIDRHLTAELLGFDGIYENSIDAVSDRDFIIEFLSNSSMLMMHLSRFCEELILWSSQEFQFIEIDDAFATGSSIMPQKKNPDMAELIRGKTGRVYGNLLALLTVMKGTPLAYNKDMQEDKEGMFDTVKTVTGSLKIFAGMIKTMKVNVDVMEKATKQDFSNATELADYLANKGVPFREAHEIVGKLVLICIEKGVFLADLPLDVYKEASPLFEEDIYEALKPYTAVNRRNSAGGTGFSEVRKALEKAKKIVNTP.

Belongs to the lyase 1 family. Argininosuccinate lyase subfamily.

It localises to the cytoplasm. It carries out the reaction 2-(N(omega)-L-arginino)succinate = fumarate + L-arginine. The protein operates within amino-acid biosynthesis; L-arginine biosynthesis; L-arginine from L-ornithine and carbamoyl phosphate: step 3/3. The protein is Argininosuccinate lyase of Geobacillus sp. (strain WCH70).